The chain runs to 413 residues: Gamma-glutamyl phosphate reductase (413 aa).

This sequence belongs to the gamma-glutamyl phosphate reductase family.

It localises to the cytoplasm. The enzyme catalyses L-glutamate 5-semialdehyde + phosphate + NADP(+) = L-glutamyl 5-phosphate + NADPH + H(+). Its pathway is amino-acid biosynthesis; L-proline biosynthesis; L-glutamate 5-semialdehyde from L-glutamate: step 2/2. Catalyzes the NADPH-dependent reduction of L-glutamate 5-phosphate into L-glutamate 5-semialdehyde and phosphate. The product spontaneously undergoes cyclization to form 1-pyrroline-5-carboxylate. The sequence is that of Gamma-glutamyl phosphate reductase from Lactococcus lactis subsp. lactis (strain IL1403) (Streptococcus lactis).